A 302-amino-acid chain; its full sequence is uncharacterized protein (302 aa).

The next 10 membrane-spanning stretches (helical) occupy residues 13–32, 42–64, 77–96, 106–125, 132–150, 154–171, 183–202, 217–239, 246–265, and 275–297; these read GILL…IYFK, ILSH…GRRW, FWLL…IFIW, ASLG…MLFL, LQWF…QLVV, VPIV…YGLL, LFLE…IWLA, NLLL…GAAA, LGFF…VLVY, and ITFA…AGHA. Residues 22–149 enclose the EamA domain; that stretch reads TMWGIAPIYF…AAIGVGIQLV (128 aa).

This sequence belongs to the EamA transporter family.

It localises to the cell membrane. This is an uncharacterized protein from Vibrio cholerae serotype O1 (strain ATCC 39315 / El Tor Inaba N16961).